A 650-amino-acid chain; its full sequence is Acetyl-coenzyme A synthetase (650 aa).

CoA-binding positions include 191–194 (RGGR), Thr-311, and Asn-335. Residues 387 to 389 (GEP), 411 to 416 (DTWWQT), Asp-500, and Arg-515 contribute to the ATP site. Ser-523 contacts CoA. Arg-526 serves as a coordination point for ATP. Positions 537, 539, and 542 each coordinate Mg(2+). Arg-584 provides a ligand contact to CoA. Position 609 is an N6-acetyllysine (Lys-609).

This sequence belongs to the ATP-dependent AMP-binding enzyme family. The cofactor is Mg(2+). Post-translationally, acetylated. Deacetylation by the SIR2-homolog deacetylase activates the enzyme.

The catalysed reaction is acetate + ATP + CoA = acetyl-CoA + AMP + diphosphate. Functionally, catalyzes the conversion of acetate into acetyl-CoA (AcCoA), an essential intermediate at the junction of anabolic and catabolic pathways. AcsA undergoes a two-step reaction. In the first half reaction, AcsA combines acetate with ATP to form acetyl-adenylate (AcAMP) intermediate. In the second half reaction, it can then transfer the acetyl group from AcAMP to the sulfhydryl group of CoA, forming the product AcCoA. This chain is Acetyl-coenzyme A synthetase, found in Shewanella sp. (strain W3-18-1).